A 129-amino-acid chain; its full sequence is Small ribosomal subunit protein uS11 (129 aa).

The protein belongs to the universal ribosomal protein uS11 family. Part of the 30S ribosomal subunit. Interacts with proteins S7 and S18. Binds to IF-3.

Functionally, located on the platform of the 30S subunit, it bridges several disparate RNA helices of the 16S rRNA. Forms part of the Shine-Dalgarno cleft in the 70S ribosome. The protein is Small ribosomal subunit protein uS11 of Colwellia psychrerythraea (strain 34H / ATCC BAA-681) (Vibrio psychroerythus).